We begin with the raw amino-acid sequence, 71 residues long: Large ribosomal subunit protein bL31 (71 aa).

Positions 16, 18, 36, and 39 each coordinate Zn(2+).

The protein belongs to the bacterial ribosomal protein bL31 family. Type A subfamily. As to quaternary structure, part of the 50S ribosomal subunit. It depends on Zn(2+) as a cofactor.

Functionally, binds the 23S rRNA. This Syntrophus aciditrophicus (strain SB) protein is Large ribosomal subunit protein bL31.